A 105-amino-acid polypeptide reads, in one-letter code: MIPGEIQVAAGDIELNVGRETVSVNVANHGDRPVQVGSHYHFYEVNDALVFDREPSRGFRLDIPAGTAVRFEPGQARTVQLVAYAGKREVYGFQGKVMGALEGKA.

This sequence belongs to the urease beta subunit family. Heterotrimer of UreA (gamma), UreB (beta) and UreC (alpha) subunits. Three heterotrimers associate to form the active enzyme.

The protein resides in the cytoplasm. It catalyses the reaction urea + 2 H2O + H(+) = hydrogencarbonate + 2 NH4(+). It participates in nitrogen metabolism; urea degradation; CO(2) and NH(3) from urea (urease route): step 1/1. The protein is Urease subunit beta of Pseudomonas putida (strain W619).